A 216-amino-acid chain; its full sequence is Soluble inorganic pyrophosphatase 3 (216 aa).

The segment covering 1-10 (MSEEAYEETQ) has biased composition (acidic residues). The segment at 1 to 21 (MSEEAYEETQESSQSPRPVPK) is disordered. Positions 66 and 80 each coordinate substrate. Catalysis depends on Y88, which acts as the Proton donor. Y92 provides a ligand contact to substrate. Positions 102, 107, and 139 each coordinate Mg(2+). Residue Y176 participates in substrate binding.

This sequence belongs to the PPase family. The cofactor is Mg(2+). Expressed preferentially in stamen, pollen and flower, and at a low level in lateral roots and root elongation zones.

The protein resides in the cytoplasm. The catalysed reaction is diphosphate + H2O = 2 phosphate + H(+). This is Soluble inorganic pyrophosphatase 3 from Arabidopsis thaliana (Mouse-ear cress).